The primary structure comprises 130 residues: D-ribose pyranase (130 aa).

Residue His-20 is the Proton donor of the active site. Substrate is bound by residues Asp-28, His-97, and 119–121 (YAN).

Belongs to the RbsD / FucU family. RbsD subfamily. In terms of assembly, homodecamer.

Its subcellular location is the cytoplasm. It catalyses the reaction beta-D-ribopyranose = beta-D-ribofuranose. It functions in the pathway carbohydrate metabolism; D-ribose degradation; D-ribose 5-phosphate from beta-D-ribopyranose: step 1/2. Functionally, catalyzes the interconversion of beta-pyran and beta-furan forms of D-ribose. This chain is D-ribose pyranase, found in Paracidovorax citrulli (strain AAC00-1) (Acidovorax citrulli).